Here is a 199-residue protein sequence, read N- to C-terminus: Extracellular superoxide dismutase [Cu-Zn] (199 aa).

The signal sequence occupies residues 1–20; that stretch reads MMIASFAIFLSHIIFITYAT. N-linked (GlcNAc...) asparagine glycans are attached at residues N33, N60, and N70. Cu cation-binding residues include H89, H91, and H106. Cysteines 100 and 192 form a disulfide. Position 106 (H106) interacts with Zn(2+). The N-linked (GlcNAc...) asparagine glycan is linked to N111. Positions 114, 123, and 126 each coordinate Zn(2+). H163 is a Cu cation binding site.

The protein belongs to the Cu-Zn superoxide dismutase family. In terms of assembly, homodimer. Requires Cu cation as cofactor. Zn(2+) is required as a cofactor.

The protein localises to the secreted. It localises to the extracellular space. The enzyme catalyses 2 superoxide + 2 H(+) = H2O2 + O2. Functionally, protect the extracellular space from toxic effect of reactive oxygen intermediates by converting superoxide radicals into hydrogen peroxide and oxygen. May act in the parasite defense by neutralizing superoxide generated by activated leukocytes, thus acting as both an antioxidant and an anti-inflammatory factor. In Brugia pahangi (Filarial nematode worm), this protein is Extracellular superoxide dismutase [Cu-Zn].